The following is a 121-amino-acid chain: MRKSISIAFVIAITIFMSHLNVFTVYSLTPCEEATNLLTPCLRYLWAPPEAKPSPECCSGLDKVNKGVKTYDDRHDMCICLSSEAAITSADQYKFDNLPKLCNVALFAPVGPKFDCSTIKV.

The signal sequence occupies residues 1-27 (MRKSISIAFVIAITIFMSHLNVFTVYS). 4 cysteine pairs are disulfide-bonded: C31/C80, C41/C57, C58/C102, and C78/C116.

This sequence belongs to the plant LTP family.

In terms of biological role, plant non-specific lipid-transfer proteins transfer phospholipids as well as galactolipids across membranes. May play a role in wax or cutin deposition in the cell walls of expanding epidermal cells and certain secretory tissues. The protein is Non-specific lipid-transfer protein 9 (LTP9) of Arabidopsis thaliana (Mouse-ear cress).